A 131-amino-acid polypeptide reads, in one-letter code: MLSRLFAPKVTVSAHCDLPCGVYDPAQARIEAESVKAVQEKMAGNDDPHFQTRATVIKEQRAELAKHHVSVLWSDYFKPPHFEKYPELHQLVNDTLKALSAAKGSKDPATGQKALDYIAQIDKIFWETKKA.

Residues 1–14 (MLSRLFAPKVTVSA) constitute a propeptide that is removed on maturation. Residues H15, C16, and C20 each contribute to the Ni(2+) site.

The protein belongs to the nickel superoxide dismutase family. In terms of assembly, homohexamer. The hexameric protein has a roughly the shape of a hollow sphere with an outer diameter of 60 angstroms and a large interior cavity. It depends on Ni(2+) as a cofactor.

It is found in the cytoplasm. It catalyses the reaction 2 superoxide + 2 H(+) = H2O2 + O2. This is Superoxide dismutase [Ni] (sodN) from Streptomyces coelicolor (strain ATCC BAA-471 / A3(2) / M145).